Here is a 131-residue protein sequence, read N- to C-terminus: Small ribosomal subunit protein uS8 (131 aa).

This sequence belongs to the universal ribosomal protein uS8 family. Part of the 30S ribosomal subunit. Contacts proteins S5 and S12.

Its function is as follows. One of the primary rRNA binding proteins, it binds directly to 16S rRNA central domain where it helps coordinate assembly of the platform of the 30S subunit. The polypeptide is Small ribosomal subunit protein uS8 (Nautilia profundicola (strain ATCC BAA-1463 / DSM 18972 / AmH)).